The primary structure comprises 524 residues: Cytochrome P450 monooxygenase alt1 (524 aa).

Residues I24–L44 traverse the membrane as a helical segment. C469 provides a ligand contact to heme.

It belongs to the cytochrome P450 family. Heme is required as a cofactor.

It is found in the membrane. The protein operates within secondary metabolite biosynthesis. Functionally, cytochrome P450 monooxygenase; part of the gene cluster that mediates the biosynthesis of alternapyrone derivatives. Alternapyrone is a decaketide with octa-methylation from methionine on every C2 unit except the third unit. All the domains in the polyketide synthase alt5 are apparently involved in alternapyrone synthesis, that is, the 8 CMeT, 7 KR, 7 DH, and 4 ER reactions in the 9 KS-mediated condensation steps required for alternapyrone synthesis. the alternapyrone produced by alt5 might be intensively modified by cytochrome P450 monooxygenases alt1, alt2 and alt3 and FAD-dependent oxidoreductase alt4 present in the alt gene cluster. The protein is Cytochrome P450 monooxygenase alt1 of Alternaria solani.